Reading from the N-terminus, the 896-residue chain is FHIP family protein C05D11.8 (896 aa).

Residues 823-865 (STASSPRTSDDHDPTLFYGRSTMAPPGRKPLLREPSRQETLDD) form a disordered region. Residues 853 to 865 (LLREPSRQETLDD) show a composition bias toward basic and acidic residues.

It belongs to the FHIP family.

The sequence is that of FHIP family protein C05D11.8 from Caenorhabditis elegans.